The following is a 253-amino-acid chain: Pro-opiomelanocortin A (253 aa).

Residues 1 to 21 (MLCPAWLLAVAVVGVVRGVKG) form the signal peptide. Glutamine 22 is subject to Pyrrolidone carboxylic acid. Cystine bridges form between cysteine 23/cysteine 45 and cysteine 29/cysteine 41. N-acetylserine; in Corticotropin is present on serine 104. Valine 116 carries the valine amide modification. The disordered stretch occupies residues 228-253 (QKREQWGREEGEEKRALGERKYHFQG). Glutamine 252 bears the Glutamine amide; partial mark.

Belongs to the POMC family. In terms of processing, specific enzymatic cleavages at paired basic residues yield the different active peptides. Post-translationally, acetylation of beta-endorphin occurs in a tissue-specific manner. In terms of tissue distribution, C-terminal peptide 1 and C-terminal peptide 2 are detected in the anterior part of the nucleus lateralis tuberis of hypothalamus, in dorsal hypothalamus, thalamus, telencephalon, optic tectum and medulla oblongata (at protein level). Expressed in pituitary and hypothalamus of adult diploid animals, and hypothalamus of triploid and ovulated female trout.

It is found in the secreted. Stimulates the adrenal glands to release cortisol. Functionally, melanocyte-stimulating hormone alpha: Anorexigenic peptide. Increases the pigmentation of skin by increasing melanin production in melanocytes. In terms of biological role, melanocyte-stimulating hormone beta: Increases the pigmentation of skin by increasing melanin production in melanocytes. Its function is as follows. Beta-endorphin: Endogenous orexigenic opiate. Endogenous opiate. The sequence is that of Pro-opiomelanocortin A (pomca) from Oncorhynchus mykiss (Rainbow trout).